The chain runs to 360 residues: E3 ubiquitin-protein ligase HAKAI homolog (360 aa).

The span at 1-11 (MLQIRLRRDSP) shows a compositional bias: basic and acidic residues. The disordered stretch occupies residues 1 to 24 (MLQIRLRRDSPTETGNGARPSPTE). An RING-type zinc finger spans residues 72-107 (CVRCDFPIAIYGRLIPCDHAFCLECARSDSICYLCD). The segment at 123 to 148 (FICAAPHCLRSFLKKLDFEAHVHDLH) adopts a C2H2-type zinc-finger fold. A disordered region spans residues 156 to 360 (AEKEDGNQSD…QENRDGFGQE (205 aa)). 3 stretches are compositionally biased toward polar residues: residues 163-179 (QSDV…SEST), 186-214 (SQLQ…QNYP), and 270-283 (YPTT…QFFN). Positions 293–304 (ESGGSEQSSLLG) are enriched in low complexity.

This sequence belongs to the Hakai family. In terms of assembly, interacts with MTB and VIR. Associates with MTA, MTB, FIP37 and VIR to form the m6A writer complex which is essential for adenosine methylation at specific mRNA sequences.

The protein resides in the nucleus speckle. Its subcellular location is the nucleus. The protein localises to the nucleoplasm. It catalyses the reaction S-ubiquitinyl-[E2 ubiquitin-conjugating enzyme]-L-cysteine + [acceptor protein]-L-lysine = [E2 ubiquitin-conjugating enzyme]-L-cysteine + N(6)-ubiquitinyl-[acceptor protein]-L-lysine.. Functionally, probable E3 ubiquitin-protein ligase which is a subunit of the N6-methyltransferase complex, a multiprotein complex that mediates N6-methyladenosine (m6A) methylation at the 5'-[AG]GAC-3' consensus sites of some mRNAs. Associates with MTA, MTB, FIP37 and VIR to form the m6A writer complex which is essential for adenosine methylation at specific mRNA sequences. N6-methyladenosine (m6A) plays a role in mRNA stability, processing, translation efficiency and editing. The polypeptide is E3 ubiquitin-protein ligase HAKAI homolog (Arabidopsis thaliana (Mouse-ear cress)).